We begin with the raw amino-acid sequence, 900 residues long: Probable 2-oxoadipate dehydrogenase complex component E1 homolog (900 aa).

Belongs to the alpha-ketoglutarate dehydrogenase family. Thiamine diphosphate serves as cofactor.

Its subcellular location is the mitochondrion. It carries out the reaction N(6)-[(R)-lipoyl]-L-lysyl-[protein] + 2-oxoadipate + H(+) = N(6)-[(R)-S(8)-glutaryldihydrolipoyl]-L-lysyl-[protein] + CO2. In terms of biological role, 2-oxoadipate dehydrogenase (E1a) component of the 2-oxoadipate dehydrogenase complex (OADHC). Participates in the first step, rate limiting for the overall conversion of 2-oxoadipate (alpha-ketoadipate) to glutaryl-CoA and CO(2) catalyzed by the whole OADHC. Catalyzes the irreversible decarboxylation of 2-oxoadipate via the thiamine diphosphate (ThDP) cofactor and subsequent transfer of the decarboxylated acyl intermediate on an oxidized dihydrolipoyl group that is covalently amidated to the E2 enzyme (dihydrolipoyllysine-residue succinyltransferase or DLST). The polypeptide is Probable 2-oxoadipate dehydrogenase complex component E1 homolog (odhA) (Dictyostelium discoideum (Social amoeba)).